A 312-amino-acid polypeptide reads, in one-letter code: Pantothenate kinase (312 aa).

Gly97 to Ser104 serves as a coordination point for ATP.

The protein belongs to the prokaryotic pantothenate kinase family.

The protein resides in the cytoplasm. The enzyme catalyses (R)-pantothenate + ATP = (R)-4'-phosphopantothenate + ADP + H(+). The protein operates within cofactor biosynthesis; coenzyme A biosynthesis; CoA from (R)-pantothenate: step 1/5. The polypeptide is Pantothenate kinase (Corynebacterium glutamicum (strain ATCC 13032 / DSM 20300 / JCM 1318 / BCRC 11384 / CCUG 27702 / LMG 3730 / NBRC 12168 / NCIMB 10025 / NRRL B-2784 / 534)).